The primary structure comprises 181 residues: Large ribosomal subunit protein uL10 (181 aa).

Belongs to the universal ribosomal protein uL10 family. As to quaternary structure, part of the ribosomal stalk of the 50S ribosomal subunit. The N-terminus interacts with L11 and the large rRNA to form the base of the stalk. The C-terminus forms an elongated spine to which L12 dimers bind in a sequential fashion forming a multimeric L10(L12)X complex.

Functionally, forms part of the ribosomal stalk, playing a central role in the interaction of the ribosome with GTP-bound translation factors. This Chloroflexus aggregans (strain MD-66 / DSM 9485) protein is Large ribosomal subunit protein uL10.